A 368-amino-acid polypeptide reads, in one-letter code: Anhydro-N-acetylmuramic acid kinase (368 aa).

13-20 is a binding site for ATP; sequence GTSLDGVD.

Belongs to the anhydro-N-acetylmuramic acid kinase family.

It catalyses the reaction 1,6-anhydro-N-acetyl-beta-muramate + ATP + H2O = N-acetyl-D-muramate 6-phosphate + ADP + H(+). The protein operates within amino-sugar metabolism; 1,6-anhydro-N-acetylmuramate degradation. Its pathway is cell wall biogenesis; peptidoglycan recycling. Catalyzes the specific phosphorylation of 1,6-anhydro-N-acetylmuramic acid (anhMurNAc) with the simultaneous cleavage of the 1,6-anhydro ring, generating MurNAc-6-P. Is required for the utilization of anhMurNAc either imported from the medium or derived from its own cell wall murein, and thus plays a role in cell wall recycling. The protein is Anhydro-N-acetylmuramic acid kinase of Hahella chejuensis (strain KCTC 2396).